Consider the following 485-residue polypeptide: Ras-like GTPase YcjX (485 aa).

The Walker A motif signature appears at 33–40; it reads GLSGAGKT. Ser-35, Gly-36, Gly-38, Lys-39, Thr-40, Ala-41, Trp-110, Ser-113, Thr-114, Arg-115, Lys-355, Asp-357, and His-358 together coordinate GTP. GDP contacts are provided by Gly-36, Gly-38, Lys-39, Thr-40, Ala-41, Trp-110, Ser-113, and Thr-114. Lys-355, Asp-357, His-358, Ser-395, Ala-396, and Ile-397 together coordinate GDP. Ile-397 contacts GTP.

Monomer in solution. It depends on Mg(2+) as a cofactor.

It catalyses the reaction GTP + H2O = GDP + phosphate + H(+). Alternates between an inactive form bound to GDP and an active form bound to GTP. Likely activated by a guanine nucleotide-exchange factor (GEF). Functionally, binds GTP and GDP. Has intrinsic GTPase activity. Does not hydrolyze ATP. May act as a transducer of stress responses. This Shewanella oneidensis (strain ATCC 700550 / JCM 31522 / CIP 106686 / LMG 19005 / NCIMB 14063 / MR-1) protein is Ras-like GTPase YcjX.